Reading from the N-terminus, the 876-residue chain is Alanine--tRNA ligase (876 aa).

An N6-acetyllysine modification is found at K74. Residues H564, H568, C666, and H670 each contribute to the Zn(2+) site.

Belongs to the class-II aminoacyl-tRNA synthetase family. In terms of assembly, homotetramer. Requires Zn(2+) as cofactor.

It is found in the cytoplasm. It catalyses the reaction tRNA(Ala) + L-alanine + ATP = L-alanyl-tRNA(Ala) + AMP + diphosphate. Its function is as follows. Catalyzes the attachment of alanine to tRNA(Ala) in a two-step reaction: alanine is first activated by ATP to form Ala-AMP and then transferred to the acceptor end of tRNA(Ala). Also edits incorrectly charged Ser-tRNA(Ala) and Gly-tRNA(Ala) via its editing domain. In Shigella boydii serotype 18 (strain CDC 3083-94 / BS512), this protein is Alanine--tRNA ligase.